A 101-amino-acid polypeptide reads, in one-letter code: Aspartyl/glutamyl-tRNA(Asn/Gln) amidotransferase subunit C (101 aa).

The protein belongs to the GatC family. As to quaternary structure, heterotrimer of A, B and C subunits.

The enzyme catalyses L-glutamyl-tRNA(Gln) + L-glutamine + ATP + H2O = L-glutaminyl-tRNA(Gln) + L-glutamate + ADP + phosphate + H(+). The catalysed reaction is L-aspartyl-tRNA(Asn) + L-glutamine + ATP + H2O = L-asparaginyl-tRNA(Asn) + L-glutamate + ADP + phosphate + 2 H(+). Its function is as follows. Allows the formation of correctly charged Asn-tRNA(Asn) or Gln-tRNA(Gln) through the transamidation of misacylated Asp-tRNA(Asn) or Glu-tRNA(Gln) in organisms which lack either or both of asparaginyl-tRNA or glutaminyl-tRNA synthetases. The reaction takes place in the presence of glutamine and ATP through an activated phospho-Asp-tRNA(Asn) or phospho-Glu-tRNA(Gln). This is Aspartyl/glutamyl-tRNA(Asn/Gln) amidotransferase subunit C from Enterococcus faecalis (strain ATCC 700802 / V583).